Here is a 346-residue protein sequence, read N- to C-terminus: Holliday junction branch migration complex subunit RuvB (346 aa).

Residues 1–182 (MSEPARLISP…FGIPVRLSFY (182 aa)) form a large ATPase domain (RuvB-L) region. Residues L21, R22, G63, K66, T67, T68, 129–131 (EDF), R172, Y182, and R219 each bind ATP. Residue T67 coordinates Mg(2+). Residues 183–253 (TVEELELIVR…IADEALTRLL (71 aa)) are small ATPAse domain (RuvB-S). A head domain (RuvB-H) region spans residues 256–346 (NVGFDQLDKR…AQFRLFQEDD (91 aa)). DNA-binding residues include R292, R311, and R316.

It belongs to the RuvB family. As to quaternary structure, homohexamer. Forms an RuvA(8)-RuvB(12)-Holliday junction (HJ) complex. HJ DNA is sandwiched between 2 RuvA tetramers; dsDNA enters through RuvA and exits via RuvB. An RuvB hexamer assembles on each DNA strand where it exits the tetramer. Each RuvB hexamer is contacted by two RuvA subunits (via domain III) on 2 adjacent RuvB subunits; this complex drives branch migration. In the full resolvosome a probable DNA-RuvA(4)-RuvB(12)-RuvC(2) complex forms which resolves the HJ.

It is found in the cytoplasm. The catalysed reaction is ATP + H2O = ADP + phosphate + H(+). In terms of biological role, the RuvA-RuvB-RuvC complex processes Holliday junction (HJ) DNA during genetic recombination and DNA repair, while the RuvA-RuvB complex plays an important role in the rescue of blocked DNA replication forks via replication fork reversal (RFR). RuvA specifically binds to HJ cruciform DNA, conferring on it an open structure. The RuvB hexamer acts as an ATP-dependent pump, pulling dsDNA into and through the RuvAB complex. RuvB forms 2 homohexamers on either side of HJ DNA bound by 1 or 2 RuvA tetramers; 4 subunits per hexamer contact DNA at a time. Coordinated motions by a converter formed by DNA-disengaged RuvB subunits stimulates ATP hydrolysis and nucleotide exchange. Immobilization of the converter enables RuvB to convert the ATP-contained energy into a lever motion, pulling 2 nucleotides of DNA out of the RuvA tetramer per ATP hydrolyzed, thus driving DNA branch migration. The RuvB motors rotate together with the DNA substrate, which together with the progressing nucleotide cycle form the mechanistic basis for DNA recombination by continuous HJ branch migration. Branch migration allows RuvC to scan DNA until it finds its consensus sequence, where it cleaves and resolves cruciform DNA. This chain is Holliday junction branch migration complex subunit RuvB, found in Rhizobium etli (strain CIAT 652).